A 125-amino-acid chain; its full sequence is Large ribosomal subunit protein bL12 (125 aa).

This sequence belongs to the bacterial ribosomal protein bL12 family. As to quaternary structure, homodimer. Part of the ribosomal stalk of the 50S ribosomal subunit. Forms a multimeric L10(L12)X complex, where L10 forms an elongated spine to which 2 to 4 L12 dimers bind in a sequential fashion. Binds GTP-bound translation factors.

Forms part of the ribosomal stalk which helps the ribosome interact with GTP-bound translation factors. Is thus essential for accurate translation. In Anaeromyxobacter dehalogenans (strain 2CP-1 / ATCC BAA-258), this protein is Large ribosomal subunit protein bL12.